A 900-amino-acid polypeptide reads, in one-letter code: Probable dipeptidyl-aminopeptidase B (900 aa).

Positions 1-83 are disordered; it reads MARTDQGLGA…DILSHPRDKS (83 aa). The Cytoplasmic segment spans residues 1–90; that stretch reads MARTDQGLGA…DKSKRSRGSR (90 aa). Residues 24 to 39 are compositionally biased toward low complexity; that stretch reads NSFSSTDSLSTDGSLF. Positions 44–55 are enriched in polar residues; the sequence is NATQFQKSTQLP. Residues 91-111 form a helical; Signal-anchor for type II membrane protein membrane-spanning segment; it reads WIWVIGLLCLGGWILAFILFW. Residues 112-900 lie on the Vacuolar side of the membrane; sequence GRRNNNSDIS…HHVGSALAAT (789 aa). Residues N150, N195, N348, N410, N514, N639, and N644 are each glycosylated (N-linked (GlcNAc...) asparagine). The Charge relay system role is filled by S753. N-linked (GlcNAc...) asparagine glycosylation is present at N812. Catalysis depends on charge relay system residues D830 and H863.

Belongs to the peptidase S9B family.

Its subcellular location is the vacuole membrane. It catalyses the reaction Release of an N-terminal dipeptide, Xaa-Yaa-|-Zaa-, from a polypeptide, preferentially when Yaa is Pro, provided Zaa is neither Pro nor hydroxyproline.. Its function is as follows. Type IV dipeptidyl-peptidase which removes N-terminal dipeptides sequentially from polypeptides having unsubstituted N-termini provided that the penultimate residue is proline. This chain is Probable dipeptidyl-aminopeptidase B (dapB), found in Talaromyces stipitatus (strain ATCC 10500 / CBS 375.48 / QM 6759 / NRRL 1006) (Penicillium stipitatum).